A 139-amino-acid polypeptide reads, in one-letter code: MGRARRTVRAPAQHDALGGHALARKSVRSPSRRLRFGRRSDPDMPPQAPLDEMNELLSLREVRTPVRLRFGRRSEERAVPHIFPQEFLTQEQDRAVRAPSIRLRFGRRSDNNMFLLPYESALPQEVKANGSVEDDRQQE.

Positions 1 to 23 are excised as a propeptide; sequence MGRARRTVRAPAQHDALGGHALA. Residues 1–48 form a disordered region; the sequence is MGRARRTVRAPAQHDALGGHALARKSVRSPSRRLRFGRRSDPDMPPQA. Residues 22-37 show a composition bias toward basic residues; sequence LARKSVRSPSRRLRFG. The residue at position 36 (Phe-36) is a Phenylalanine amide. A propeptide spanning residues 40–62 is cleaved from the precursor; it reads SDPDMPPQAPLDEMNELLSLREV. Phe-70 carries the post-translational modification Phenylalanine amide. A propeptide spanning residues 74–96 is cleaved from the precursor; it reads SEERAVPHIFPQEFLTQEQDRAV. The residue at position 105 (Phe-105) is a Phenylalanine amide. Positions 109 to 139 are excised as a propeptide; that stretch reads SDNNMFLLPYESALPQEVKANGSVEDDRQQE.

This sequence belongs to the NPY family. As to expression, sNPF peptide 1: Expressed in corpora cardiaca (CC), corpora allata (CA), antennal lobe (AL) and gnathal ganglion (GNG) (at protein level). Expression in AL detected in all animals, in GNG in most animals, expression in CC and CA in some animals (at protein level). sNPF peptide 2: Expressed in corpora cardiaca (CC), corpora allata (CA), antennal lobe (AL) and gnathal ganglion (GNG) (at protein level). Expression in AL detected in all animals, in GNG, CC and CA in most animals (at protein level). sNPF peptide 3: Expressed in corpora cardiaca (CC), corpora allata (CA), antennal lobe (AL) and gnathal ganglion (GNG) (at protein level). Expression detected in all animals (at protein level).

It localises to the secreted. Its function is as follows. Plays a role in controlling food intake and regulating body size. In Agrotis ipsilon (Black cutworm moth), this protein is Short neuropeptide F.